A 103-amino-acid polypeptide reads, in one-letter code: UPF0145 protein PBPRB0184 (103 aa).

The protein belongs to the UPF0145 family.

The polypeptide is UPF0145 protein PBPRB0184 (Photobacterium profundum (strain SS9)).